The chain runs to 231 residues: 7-cyano-7-deazaguanine synthase (231 aa).

7–17 (LSSGLDSVAAL) contacts ATP. Positions 195, 203, 206, and 209 each coordinate Zn(2+).

The protein belongs to the QueC family. Zn(2+) is required as a cofactor.

The enzyme catalyses 7-carboxy-7-deazaguanine + NH4(+) + ATP = 7-cyano-7-deazaguanine + ADP + phosphate + H2O + H(+). The protein operates within purine metabolism; 7-cyano-7-deazaguanine biosynthesis. Catalyzes the ATP-dependent conversion of 7-carboxy-7-deazaguanine (CDG) to 7-cyano-7-deazaguanine (preQ(0)). The protein is 7-cyano-7-deazaguanine synthase of Methanosarcina mazei (strain ATCC BAA-159 / DSM 3647 / Goe1 / Go1 / JCM 11833 / OCM 88) (Methanosarcina frisia).